The sequence spans 562 residues: Arginine--tRNA ligase (562 aa).

Residues 121–131 (PNIAKPMGMGH) carry the 'HIGH' region motif.

Belongs to the class-I aminoacyl-tRNA synthetase family. Monomer.

Its subcellular location is the cytoplasm. The catalysed reaction is tRNA(Arg) + L-arginine + ATP = L-arginyl-tRNA(Arg) + AMP + diphosphate. This Limosilactobacillus fermentum (strain NBRC 3956 / LMG 18251) (Lactobacillus fermentum) protein is Arginine--tRNA ligase.